The primary structure comprises 74 residues: uncharacterized protein (74 aa).

Disordered regions lie at residues Met-1–Phe-26 and Ile-46–Gln-74. A helical membrane pass occupies residues Val-34 to Pro-50. Residues Thr-47–Gln-74 show a composition bias toward low complexity.

Its subcellular location is the membrane. This is an uncharacterized protein from Dictyostelium discoideum (Social amoeba).